A 332-amino-acid polypeptide reads, in one-letter code: Cyclin-dependent kinase 1 (332 aa).

The region spanning 22–312 (FTKLEKIGEG…AKKALVHPYF (291 aa)) is the Protein kinase domain. ATP is bound by residues 28–36 (IGEGTYGVV) and lysine 51. Threonine 32 is modified (phosphothreonine). Tyrosine 33 carries the post-translational modification Phosphotyrosine. The active-site Proton acceptor is the aspartate 146.

Belongs to the protein kinase superfamily. CMGC Ser/Thr protein kinase family. CDC2/CDKX subfamily. As to quaternary structure, forms a stable but non-covalent complex with a regulatory subunit and with a cyclin. Interacts with cks-1. Phosphorylated.

The protein localises to the nucleus. It is found in the cytoplasm. Its subcellular location is the cytoskeleton. The protein resides in the microtubule organizing center. It localises to the centrosome. The protein localises to the chromosome. The catalysed reaction is L-seryl-[protein] + ATP = O-phospho-L-seryl-[protein] + ADP + H(+). The enzyme catalyses L-threonyl-[protein] + ATP = O-phospho-L-threonyl-[protein] + ADP + H(+). It carries out the reaction [DNA-directed RNA polymerase] + ATP = phospho-[DNA-directed RNA polymerase] + ADP + H(+). With respect to regulation, phosphorylation both activates and inactivates the enzyme depending on the site of phosphorylation. Plays a key role in the control of the eukaryotic cell cycle. Required for entry into S-phase and mitosis. Acts as a component of the kinase complex that phosphorylates the repetitive C-terminus of RNA polymerase II. May function in concert with npp-16 to arrest prophase blastomeres in response to anoxia. The sequence is that of Cyclin-dependent kinase 1 (cdk-1) from Caenorhabditis elegans.